We begin with the raw amino-acid sequence, 454 residues long: Bifunctional protein GlmU (454 aa).

Residues 1–225 are pyrophosphorylase; it reads MNIVILAAGM…VWETLGVNSK (225 aa). Residues 6–9, K20, Q71, 76–77, 98–100, G135, E150, N165, and N223 contribute to the UDP-N-acetyl-alpha-D-glucosamine site; these read LAAG, GT, and YGD. Residue D100 coordinates Mg(2+). Position 223 (N223) interacts with Mg(2+). The linker stretch occupies residues 226–246; sequence LQLAEVERIHQGNQARRLLEA. Positions 247–454 are N-acetyltransferase; that stretch reads GVTLLDPARI…WQRPVKQPKQ (208 aa). UDP-N-acetyl-alpha-D-glucosamine contacts are provided by R329 and K347. H359 (proton acceptor) is an active-site residue. UDP-N-acetyl-alpha-D-glucosamine is bound by residues Y362 and N373. Acetyl-CoA is bound by residues A376, 382-383, S401, A419, and R436; that span reads NY.

In the N-terminal section; belongs to the N-acetylglucosamine-1-phosphate uridyltransferase family. This sequence in the C-terminal section; belongs to the transferase hexapeptide repeat family. As to quaternary structure, homotrimer. Requires Mg(2+) as cofactor.

It localises to the cytoplasm. The enzyme catalyses alpha-D-glucosamine 1-phosphate + acetyl-CoA = N-acetyl-alpha-D-glucosamine 1-phosphate + CoA + H(+). It catalyses the reaction N-acetyl-alpha-D-glucosamine 1-phosphate + UTP + H(+) = UDP-N-acetyl-alpha-D-glucosamine + diphosphate. It participates in nucleotide-sugar biosynthesis; UDP-N-acetyl-alpha-D-glucosamine biosynthesis; N-acetyl-alpha-D-glucosamine 1-phosphate from alpha-D-glucosamine 6-phosphate (route II): step 2/2. Its pathway is nucleotide-sugar biosynthesis; UDP-N-acetyl-alpha-D-glucosamine biosynthesis; UDP-N-acetyl-alpha-D-glucosamine from N-acetyl-alpha-D-glucosamine 1-phosphate: step 1/1. It functions in the pathway bacterial outer membrane biogenesis; LPS lipid A biosynthesis. Functionally, catalyzes the last two sequential reactions in the de novo biosynthetic pathway for UDP-N-acetylglucosamine (UDP-GlcNAc). The C-terminal domain catalyzes the transfer of acetyl group from acetyl coenzyme A to glucosamine-1-phosphate (GlcN-1-P) to produce N-acetylglucosamine-1-phosphate (GlcNAc-1-P), which is converted into UDP-GlcNAc by the transfer of uridine 5-monophosphate (from uridine 5-triphosphate), a reaction catalyzed by the N-terminal domain. The protein is Bifunctional protein GlmU of Cupriavidus taiwanensis (strain DSM 17343 / BCRC 17206 / CCUG 44338 / CIP 107171 / LMG 19424 / R1) (Ralstonia taiwanensis (strain LMG 19424)).